The chain runs to 283 residues: 4-diphosphocytidyl-2-C-methyl-D-erythritol kinase (283 aa).

The active site involves K11. 94–104 (PVAAGLAGGSA) is an ATP binding site. Residue D136 is part of the active site.

It belongs to the GHMP kinase family. IspE subfamily.

The enzyme catalyses 4-CDP-2-C-methyl-D-erythritol + ATP = 4-CDP-2-C-methyl-D-erythritol 2-phosphate + ADP + H(+). It participates in isoprenoid biosynthesis; isopentenyl diphosphate biosynthesis via DXP pathway; isopentenyl diphosphate from 1-deoxy-D-xylulose 5-phosphate: step 3/6. In terms of biological role, catalyzes the phosphorylation of the position 2 hydroxy group of 4-diphosphocytidyl-2C-methyl-D-erythritol. This chain is 4-diphosphocytidyl-2-C-methyl-D-erythritol kinase, found in Acetivibrio thermocellus (strain ATCC 27405 / DSM 1237 / JCM 9322 / NBRC 103400 / NCIMB 10682 / NRRL B-4536 / VPI 7372) (Clostridium thermocellum).